A 462-amino-acid polypeptide reads, in one-letter code: UDP-N-acetylmuramoylalanine--D-glutamate ligase (462 aa).

109–115 (GTDGKST) is a binding site for ATP.

The protein belongs to the MurCDEF family.

It is found in the cytoplasm. It catalyses the reaction UDP-N-acetyl-alpha-D-muramoyl-L-alanine + D-glutamate + ATP = UDP-N-acetyl-alpha-D-muramoyl-L-alanyl-D-glutamate + ADP + phosphate + H(+). Its pathway is cell wall biogenesis; peptidoglycan biosynthesis. Its function is as follows. Cell wall formation. Catalyzes the addition of glutamate to the nucleotide precursor UDP-N-acetylmuramoyl-L-alanine (UMA). In Leptospira borgpetersenii serovar Hardjo-bovis (strain JB197), this protein is UDP-N-acetylmuramoylalanine--D-glutamate ligase.